The primary structure comprises 250 residues: Mycofactocin precursor peptide peptidase (250 aa).

The a divalent metal cation site is built by Glu38, His40, Asp49, His127, and Glu166.

Belongs to the creatininase superfamily. Homooctamer. Fe(2+) serves as cofactor. Requires Zn(2+) as cofactor.

The enzyme catalyses [mycofactocin precursor peptide]-C-terminal glycyl-N-{5-[(4-hydroxyphenyl)methyl]-4,4-dimethyl-2-oxopyrrolidin-3-yl}acetamide + H2O = [mycofactocin precursor peptide]-C-terminal glycine + 3-amino-5-[(4-hydroxyphenyl)methyl]-4,4-dimethyl-2-pyrrolidin-2-one. In terms of biological role, peptidase involved in the biosynthesis of the enzyme cofactor mycofactocin (MFT). Catalyzes cleavage of the MftC-modified MftA peptide to liberate its final two residues, which consist of a cross-linked valine-decarboxylated tyrosine dipeptide (named 3-amino-5-[(4-hydroxyphenyl)methyl]-4,4-dimethyl-2-pyrrolidin-2-one or ADHP). This Mycobacterium ulcerans (strain Agy99) protein is Mycofactocin precursor peptide peptidase.